We begin with the raw amino-acid sequence, 469 residues long: Neuraminidase (469 aa).

Topologically, residues 1-6 are intravirion; the sequence is MNPNQK. The helical transmembrane segment at 7 to 29 threads the bilayer; the sequence is IITIGSVSLTIATVCFLMQTAIL. Residues 11 to 33 form an involved in apical transport and lipid raft association region; the sequence is GSVSLTIATVCFLMQTAILVTTV. The Virion surface segment spans residues 30–469; it reads VTTVTLHFKQ…DGANINFMPI (440 aa). Residues 36–90 form a hypervariable stalk region region; it reads HFKQYECDSPASNQVMPCEPIIIERNITEIVYLNNTTIEKEICPKVVEYRNWSKP. N-linked (GlcNAc...) asparagine; by host glycosylation is found at Asn-61, Asn-69, Asn-70, and Asn-86. Residues 91 to 469 form a head of neuraminidase region; sequence QCQITGFAPF…DGANINFMPI (379 aa). Disulfide bonds link Cys-92–Cys-417, Cys-124–Cys-129, Cys-183–Cys-230, Cys-232–Cys-237, Cys-278–Cys-291, Cys-280–Cys-289, Cys-318–Cys-337, and Cys-421–Cys-447. Arg-118 contacts substrate. A glycan (N-linked (GlcNAc...) asparagine; by host) is linked at Asn-146. The Proton donor/acceptor role is filled by Asp-151. Residue Arg-152 coordinates substrate. N-linked (GlcNAc...) asparagine; by host glycans are attached at residues Asn-200 and Asn-234. 276–277 is a substrate binding site; that stretch reads EE. A substrate-binding site is contributed by Arg-292. Residues Asp-293, Gly-297, and Asp-324 each coordinate Ca(2+). Positions 324–350 are disordered; the sequence is DTPRNDDRSSNSNCRNPNNERGNQGVK. Positions 333–342 are enriched in low complexity; it reads SNSNCRNPNN. Residue Arg-371 participates in substrate binding. Asn-402 carries an N-linked (GlcNAc...) asparagine; by host glycan. Tyr-406 functions as the Nucleophile in the catalytic mechanism.

The protein belongs to the glycosyl hydrolase 34 family. As to quaternary structure, homotetramer. It depends on Ca(2+) as a cofactor. In terms of processing, N-glycosylated.

The protein resides in the virion membrane. The protein localises to the host apical cell membrane. It catalyses the reaction Hydrolysis of alpha-(2-&gt;3)-, alpha-(2-&gt;6)-, alpha-(2-&gt;8)- glycosidic linkages of terminal sialic acid residues in oligosaccharides, glycoproteins, glycolipids, colominic acid and synthetic substrates.. Its activity is regulated as follows. Inhibited by the neuraminidase inhibitors zanamivir (Relenza) and oseltamivir (Tamiflu). These drugs interfere with the release of progeny virus from infected cells and are effective against all influenza strains. Resistance to neuraminidase inhibitors is quite rare. Catalyzes the removal of terminal sialic acid residues from viral and cellular glycoconjugates. Cleaves off the terminal sialic acids on the glycosylated HA during virus budding to facilitate virus release. Additionally helps virus spread through the circulation by further removing sialic acids from the cell surface. These cleavages prevent self-aggregation and ensure the efficient spread of the progeny virus from cell to cell. Otherwise, infection would be limited to one round of replication. Described as a receptor-destroying enzyme because it cleaves a terminal sialic acid from the cellular receptors. May facilitate viral invasion of the upper airways by cleaving the sialic acid moieties on the mucin of the airway epithelial cells. Likely to plays a role in the budding process through its association with lipid rafts during intracellular transport. May additionally display a raft-association independent effect on budding. Plays a role in the determination of host range restriction on replication and virulence. Sialidase activity in late endosome/lysosome traffic seems to enhance virus replication. This Influenza A virus (strain A/Northern Territory/60/1968 H3N2) (Influenza A virus (strain NT60)) protein is Neuraminidase.